Consider the following 807-residue polypeptide: Leucine-rich repeat-containing protein 41 (807 aa).

Residues 45-54 (ALFELCGRAV) are interaction with Elongin BC complex. Residues S155, S276, and S326 each carry the phosphoserine modification. Disordered regions lie at residues 269–290 (ASRG…RRPR), 304–335 (TRRK…AIGG), and 349–403 (ASGT…GSGA). T327 carries the post-translational modification Phosphothreonine. The span at 352-381 (TKQPSAPAAASASSSTSSKRAPASSASQPK) shows a compositional bias: low complexity. Position 368 is a phosphoserine (S368). The span at 382–396 (PLKRFKRAAGKKGPR) shows a compositional bias: basic residues. LRR repeat units lie at residues 482–502 (WVSL…IFRL), 513–525 (AGCR…LSDL), 526–550 (FSPL…VLSI), 608–632 (SGSL…LVLQ), 638–661 (NLSL…VLFL), 696–723 (NSTL…VFSE), and 726–747 (SSSL…LLEF).

As to quaternary structure, part of an E3 ubiquitin-protein ligase complex with Elongin BC (ELOB and ELOC), RBX1 and CUL5. Component of a probable ECS(LRRC41) complex which contains CUL5, RNF7/RBX2, Elongin BC and LRRC41. Interacts with CUL5, RNF7, ELOB and ELOC.

The protein operates within protein modification; protein ubiquitination. Probable substrate recognition component of an ECS (Elongin BC-CUL2/5-SOCS-box protein) E3 ubiquitin ligase complex which mediates the ubiquitination and subsequent proteasomal degradation of target proteins. The sequence is that of Leucine-rich repeat-containing protein 41 (Lrrc41) from Mus musculus (Mouse).